The following is a 305-amino-acid chain: Lysosomal thioesterase PPT2 (305 aa).

An N-terminal signal peptide occupies residues 1–32; sequence MLGLPERRLPSAEFLLLLPFLLLLLLLLPAAP. Cystine bridges form between Cys112/Cys120 and Cys168/Cys179. The active-site Nucleophile is the Ser114. A glycan (N-linked (GlcNAc...) asparagine) is linked at Asn193. Catalysis depends on residues Asp231 and His286. Cys279 and Cys299 are joined by a disulfide.

This sequence belongs to the palmitoyl-protein thioesterase family.

The protein localises to the lysosome. The catalysed reaction is hexadecanoyl-CoA + H2O = hexadecanoate + CoA + H(+). The enzyme catalyses S-hexadecanoyl-N-acetylcysteamine + H2O = N-acetylcysteamine + hexadecanoate + H(+). In terms of biological role, catalyzes the cleavage of thioester bonds from S-palmitoyl-CoA or S-palmitoyl-N-acetylcysteamine (unbranched structures) but does not have activity against palmitoylcysteine or palmitoylated proteins, branched structures or bulky head groups. Conversely, hydrolyzes both long and short chain fatty acyl-CoA substrate. The sequence is that of Lysosomal thioesterase PPT2 (PPT2) from Bos taurus (Bovine).